We begin with the raw amino-acid sequence, 345 residues long: Heat stress transcription factor A-2 (345 aa).

The segment covering 17–30 (GSVAASSSVGSSSS) has biased composition (low complexity). A disordered region spans residues 17–40 (GSVAASSSVGSSSSPRPMEGLNET). A DNA-binding region spans residues 42–136 (PPPFLTKTYE…LLKNIKRRRN (95 aa)). The hydrophobic repeat HR-A/B stretch occupies residues 150–216 (SCVEVGQYGF…QMMTFLAKAL (67 aa)). The Nuclear localization signal signature appears at 231 to 238 (EKKSLFGL). Positions 273–282 (EMLFAAAIDD) match the AHA1 motif. Lysine 315 is covalently cross-linked (Glycyl lysine isopeptide (Lys-Gly) (interchain with G-Cter in SUMO)). The AHA2 signature appears at 324–333 (LDWDSQDLHD). Residues 334–341 (MVDQMGFL) carry the Nuclear export signal motif.

The protein belongs to the HSF family. Class A subfamily. In terms of assembly, homotrimer. Interacts with SUMO1. Binds to HSBP. In terms of processing, exhibits temperature-dependent phosphorylation. Sumoylated at Lys-315. Sumoylation represses its function.

It localises to the cytoplasm. The protein localises to the nucleus. Its function is as follows. Transcriptional activator that specifically binds DNA sequence 5'-AGAAnnTTCT-3' known as heat shock promoter elements (HSE). Seems to be involved in other environmental stress responses. Activates ascorbate peroxidase 2 (APX2) in addition to several heat shock protein (HSPs). Binds to the promoter of SGIP1 and activates its expression in heat acclimated plants. Involved in the mechanisms necessary for quick response to heat and subsequent heritable transgenerational memory of heat acclimation (global warming) such as early flowering and attenuated immunity; this process includes epigenetic regulation as well as post-transcriptional gene silencing (PTGS). In response to heat, HSFA2 is activated and promotes the expression of REF6 which in turn derepresses HSFA2, thus establishing an inheritable feedback loop able to trigger SGIP1 and subsequent SGIP1-mediated SGS3 degradation; this prevents the biosynthesis of trans-acting siRNA (tasiRNA) and leads to the release of HTT5, which drives early flowering but attenuates immunity. The polypeptide is Heat stress transcription factor A-2 (Arabidopsis thaliana (Mouse-ear cress)).